A 294-amino-acid chain; its full sequence is uncharacterized protein (294 aa).

2 disordered regions span residues 25–59 (VQVY…RVRR) and 77–141 (LKDD…FEAP). Positions 86 to 139 (YEELEDDDDDESIEEESDSEFEGESSSDEEESSYDSDSDYDSETEPEDSDDDFE) are enriched in acidic residues. A coiled-coil region spans residues 201 to 234 (IKFYKRNTTFTEEELAEIEEDLLAEVKARYNNMK). The span at 242–259 (TIETTEDDKKAGEVNKYD) shows a compositional bias: basic and acidic residues. The disordered stretch occupies residues 242-294 (TIETTEDDKKAGEVNKYDIDDDFIEKTESDEEEEITEDDSSEQETVVVEPVDE). Over residues 260–283 (IDDDFIEKTESDEEEEITEDDSSE) the composition is skewed to acidic residues.

This is an uncharacterized protein from Magallana gigas (Pacific oyster).